A 310-amino-acid chain; its full sequence is MTGPGELAGSRPVDAHLENGAGIDVVLVTGLSGAGRGTAAKVLEDLGWYVADNLPPQLITRMVDLGMDAGSRITQLAVVMDVRSRGFTGDLDSVRTELATRNIAPRVVFMEASDDMLVRRYEQNRRSHPLQGDQTLAEGIAAERRMLAPVRATADLIIDTSTLSVRALRETIERAFGGGANATISVTVESFGFKYGLPMDADMVMDVRFLPNPHWVDELRPRTGQDPAVRDYVLGQPGAAEFLDAYHRLLSLVVDGYRREGKRYMTVAIGCTGGKHRSVAIAEALMQRLQAQHGEAQLSVRVLHRDLGRE.

30-37 (GLSGAGRG) contacts ATP. Residue 81–84 (DVRS) coordinates GTP.

Belongs to the RapZ-like family.

In terms of biological role, displays ATPase and GTPase activities. The chain is Nucleotide-binding protein MAP_1147 from Mycolicibacterium paratuberculosis (strain ATCC BAA-968 / K-10) (Mycobacterium paratuberculosis).